The chain runs to 217 residues: Peptide methionine sulfoxide reductase MsrA (217 aa).

Positions 16 to 39 (EALKGGRHPVLESPQPHTVLGTPI) are disordered. Residue C56 is part of the active site.

The protein belongs to the MsrA Met sulfoxide reductase family.

The enzyme catalyses L-methionyl-[protein] + [thioredoxin]-disulfide + H2O = L-methionyl-(S)-S-oxide-[protein] + [thioredoxin]-dithiol. The catalysed reaction is [thioredoxin]-disulfide + L-methionine + H2O = L-methionine (S)-S-oxide + [thioredoxin]-dithiol. In terms of biological role, has an important function as a repair enzyme for proteins that have been inactivated by oxidation. Catalyzes the reversible oxidation-reduction of methionine sulfoxide in proteins to methionine. The protein is Peptide methionine sulfoxide reductase MsrA of Corynebacterium efficiens (strain DSM 44549 / YS-314 / AJ 12310 / JCM 11189 / NBRC 100395).